The chain runs to 397 residues: Autophagy-related protein 29 (397 aa).

Positions 71–397 (ATAAVRNSGP…RSRYTSSSNQ (327 aa)) are disordered. Over residues 230–240 (QYEDDDDDESE) the composition is skewed to acidic residues. The segment covering 245-259 (PYTSPSSKTSAQDLG) has biased composition (polar residues). A compositionally biased stretch (basic residues) spans 269–282 (SGKRPHKSHGKPAI). Basic and acidic residues-rich tracts occupy residues 300–309 (KPDKTDRSTE) and 330–341 (GGKDKGYSREGS). Polar residues-rich tracts occupy residues 343 to 363 (GTPS…TQSA) and 381 to 397 (FSIS…SSNQ).

This sequence belongs to the ATG29 family. As to quaternary structure, forms a stable complex with ATG17 and ATG31. Interacts directly with ATG31. The ATG17-ATG29-ATG31 complex interacts with the ATG1-ATG13 complex. Note=The interaction with the ATG1-ATG13 complex is induced by starvation.

It localises to the preautophagosomal structure. In terms of biological role, plays a role in autophagy. Functions at the preautophagosomal structure (PAS) in order to form normal autophagosomes under starvation conditions. Also plays a role in mitophagy. Autophagy is required for proper vegetative growth, asexual/sexual reproduction, and full virulence. Autophagy is particularly involved in the biosynthesis of deoxynivalenol (DON), an important virulence determinant. This chain is Autophagy-related protein 29, found in Gibberella zeae (strain ATCC MYA-4620 / CBS 123657 / FGSC 9075 / NRRL 31084 / PH-1) (Wheat head blight fungus).